The chain runs to 247 residues: VQ motif-containing protein 4 (247 aa).

Residues 1–128 form a disordered region; it reads MENSPRYREA…SSSSASGFRL (128 aa). Ser-16 carries the post-translational modification Phosphoserine. Residues 21 to 37 show a composition bias toward low complexity; that stretch reads NSNNSCGMSSSSESNKP. Polar residues-rich tracts occupy residues 48–75 and 87–106; these read RSES…QMLT and LKPN…SSFS. The short motif at 67 to 76 is the VQ element; that stretch reads FKQVVQMLTG. 5 positions are modified to phosphoserine: Ser-106, Ser-155, Ser-163, Ser-165, and Ser-175. The residue at position 178 (Thr-178) is a Phosphothreonine. The segment at 184-247 is disordered; sequence PFDRSGSSNQ…VSGSSSASTS (64 aa). A Phosphoserine modification is found at Ser-194. Positions 200 to 210 are enriched in basic and acidic residues; it reads AEEKAMKERGF. Phosphoserine is present on Ser-215. Phosphothreonine is present on residues Thr-219 and Thr-234. Ser-235, Ser-239, and Ser-243 each carry phosphoserine. Polar residues predominate over residues 236-247; it reads PRVSGSSSASTS.

In terms of assembly, interacts with MPK3 and MPK6. Phosphorylated on serine and threonine residues by MPK6 following treatment with the pathogen-associated molecular pattern (PAMP) flg22. MAP kinase-mediated phosphorylation after PAMP elicitation causes degradation of VQ4, allowing WRKY33 to promote transcription from defense genes.

It is found in the nucleus. Acts as a negative regulator of WRKY33 transcription factor activity in the promotion of defense gene expression. Acts as a negative regulator of pathogen-associated molecular pattern (PAMP)-induced responses to modulate resistance to pathogens. The polypeptide is VQ motif-containing protein 4 (Arabidopsis thaliana (Mouse-ear cress)).